Consider the following 795-residue polypeptide: Nucleolar complex protein 3 homolog (795 aa).

Disordered stretches follow at residues 1–88 (MKPM…PLDM), 124–144 (RDDVINKYEKMPRKSKSEPEK), and 168–190 (IPSEEQEENEEEMDTEHTEEVPE). 2 stretches are compositionally biased toward basic and acidic residues: residues 22-39 (LKLDNKLKNKQFKQESSA) and 46-58 (QKQLREAVRDVRS). Over residues 74–88 (EEEYEVEEESLPLDM) the composition is skewed to acidic residues. The span at 171–181 (EEQEENEEEMD) shows a compositional bias: acidic residues. Residues 447–492 (SYKDKKKNLSRMQRKWKKAEEKLERELLEAEASESKEKKLKLNTET) are a coiled coil.

It belongs to the CBF/MAK21 family.

It localises to the nucleus. The protein localises to the nucleolus. The chain is Nucleolar complex protein 3 homolog (noc3l) from Xenopus laevis (African clawed frog).